The chain runs to 147 residues: Transthyretin (147 aa).

Residues 1–20 form the signal peptide; it reads MASLRLFLLCLAGLVFVSEA. C30 is subject to Sulfocysteine. K35 is an L-thyroxine binding site. The residue at position 62 (E62) is a 4-carboxyglutamate. Position 72 is a phosphoserine (S72). E74 provides a ligand contact to L-thyroxine. N118 carries an N-linked (GlcNAc...) asparagine glycan. S137 is an L-thyroxine binding site.

This sequence belongs to the transthyretin family. As to quaternary structure, homotetramer. Dimer of dimers. In the homotetramer, subunits assemble around a central channel that can accommodate two ligand molecules. Interacts with RBP4. Post-translationally, sulfonation of the reactive cysteine Cys-30 enhances the stability of the native conformation of TTR, avoiding misassembly of the protein leading to amyloid formation. In terms of tissue distribution, detected in plasma (at protein level). Detected in liver.

It localises to the secreted. Its function is as follows. Thyroid hormone-binding protein. Probably transports thyroxine from the bloodstream to the brain. The sequence is that of Transthyretin (Ttr) from Mus musculus (Mouse).